The sequence spans 828 residues: Phenylalanine--tRNA ligase beta subunit (828 aa).

Residues 44–155 (GPVDGPLTVG…GTAEPGADGA (112 aa)) form the tRNA-binding domain. One can recognise a B5 domain in the interval 411–486 (WSPPAIQMPA…RLEGLEVIGS (76 aa)). Mg(2+) is bound by residues Asp464, Asp470, Glu473, and Glu474. Positions 734–827 (SPFPAVFQDV…AAEAVGAELR (94 aa)) constitute an FDX-ACB domain.

Belongs to the phenylalanyl-tRNA synthetase beta subunit family. Type 1 subfamily. In terms of assembly, tetramer of two alpha and two beta subunits. Mg(2+) is required as a cofactor.

The protein resides in the cytoplasm. It carries out the reaction tRNA(Phe) + L-phenylalanine + ATP = L-phenylalanyl-tRNA(Phe) + AMP + diphosphate + H(+). This chain is Phenylalanine--tRNA ligase beta subunit, found in Mycolicibacterium paratuberculosis (strain ATCC BAA-968 / K-10) (Mycobacterium paratuberculosis).